The primary structure comprises 487 residues: Sorting nexin-4 (487 aa).

Residues 1–59 (MDHDDFDSVSWRHGPDSDISRPTTSGTDTAESPETRRDPNGKRRMSSASEIPQAGPHAD) form a disordered region. Residues 20 to 32 (SRPTTSGTDTAES) show a composition bias toward polar residues. A PX domain is found at 70 to 192 (VLECRVDTPI…IFLESPDWNA (123 aa)). A 1,2-diacyl-sn-glycero-3-phospho-(1D-myo-inositol-3-phosphate) is bound by residues Arg113, Thr115, Lys139, and Arg158. Residues 395 to 430 (EQSRRERMRKLELRIDELTREVESAKTTSEMFDEEV) are a coiled coil.

This sequence belongs to the sorting nexin family.

It localises to the cytoplasm. Its subcellular location is the cytosol. It is found in the preautophagosomal structure membrane. The protein localises to the endosome membrane. In terms of biological role, sorting nexin, involved in the separation or division of vacuoles throughout the entire life cycle of the cells. Involved in retrieval of late-Golgi SNAREs from post-Golgi endosomes to the trans-Golgi network, for cytoplasm to vacuole transport (Cvt), and autophagy of large cargos including mitophagy, pexophagy and glycophagy. The chain is Sorting nexin-4 (snx4) from Emericella nidulans (strain FGSC A4 / ATCC 38163 / CBS 112.46 / NRRL 194 / M139) (Aspergillus nidulans).